Here is a 440-residue protein sequence, read N- to C-terminus: Glycerol-3-phosphate dehydrogenase [NAD(+)] 2, mitochondrial (440 aa).

Residues 1–16 (MLAVRRLTRYTFLKRT) constitute a mitochondrion transit peptide. A phosphoserine mark is found at serine 70, serine 72, and serine 75. NAD(+) is bound by residues 90–95 (GSGNWG), phenylalanine 122, and phenylalanine 178. Residue lysine 201 coordinates substrate. An NAD(+)-binding site is contributed by alanine 234. Lysine 294 serves as the catalytic Proton acceptor. 2 residues coordinate NAD(+): arginine 359 and glutamine 388. Residue 359-360 (RN) participates in substrate binding.

The protein belongs to the NAD-dependent glycerol-3-phosphate dehydrogenase family.

It localises to the cytoplasm. Its subcellular location is the mitochondrion. The catalysed reaction is sn-glycerol 3-phosphate + NAD(+) = dihydroxyacetone phosphate + NADH + H(+). Catalyzes the production of glycerol under anaerobic growth conditions. Glycerol production serves as a redox sink by consuming the excess cytosolic NADH during anaerobic metabolism. This is Glycerol-3-phosphate dehydrogenase [NAD(+)] 2, mitochondrial from Saccharomyces cerevisiae (strain ATCC 204508 / S288c) (Baker's yeast).